Here is a 1479-residue protein sequence, read N- to C-terminus: DNA-directed RNA polymerase subunit beta'' (1479 aa).

Zn(2+)-binding residues include Cys-220, Cys-296, Cys-303, and Cys-306. Disordered regions lie at residues 618-640 (TRAE…REDE) and 663-756 (LEDE…KKEG). Composition is skewed to acidic residues over residues 622 to 631 (DSEEEYETLE), 704 to 717 (DEYG…EDEY), and 731 to 749 (LEED…PEED).

This sequence belongs to the RNA polymerase beta' chain family. RpoC2 subfamily. As to quaternary structure, in plastids the minimal PEP RNA polymerase catalytic core is composed of four subunits: alpha, beta, beta', and beta''. When a (nuclear-encoded) sigma factor is associated with the core the holoenzyme is formed, which can initiate transcription. Zn(2+) serves as cofactor.

The protein resides in the plastid. The protein localises to the chloroplast. The catalysed reaction is RNA(n) + a ribonucleoside 5'-triphosphate = RNA(n+1) + diphosphate. In terms of biological role, DNA-dependent RNA polymerase catalyzes the transcription of DNA into RNA using the four ribonucleoside triphosphates as substrates. In Triticum aestivum (Wheat), this protein is DNA-directed RNA polymerase subunit beta''.